A 377-amino-acid polypeptide reads, in one-letter code: Cytoplasmic tRNA 2-thiolation protein 1 (377 aa).

It belongs to the TtcA family. CTU1/NCS6/ATPBD3 subfamily.

It localises to the cytoplasm. It participates in tRNA modification; 5-methoxycarbonylmethyl-2-thiouridine-tRNA biosynthesis. In terms of biological role, plays a central role in 2-thiolation of mcm(5)S(2)U at tRNA wobble positions of tRNA(Lys), tRNA(Glu) and tRNA(Gln). Directly binds tRNAs and probably acts by catalyzing adenylation of tRNAs, an intermediate required for 2-thiolation. It is unclear whether it acts as a sulfurtransferase that transfers sulfur from thiocarboxylated URM1 onto the uridine of tRNAs at wobble position. Prior mcm(5) tRNA modification by the elongator complex is required for 2-thiolation. May also be involved in protein urmylation. This Debaryomyces hansenii (strain ATCC 36239 / CBS 767 / BCRC 21394 / JCM 1990 / NBRC 0083 / IGC 2968) (Yeast) protein is Cytoplasmic tRNA 2-thiolation protein 1.